The sequence spans 260 residues: MVSFYDREFSSRLLIGTALYPSPKIMQDAIRAAGSQIVTVSLRRETAGGKTGDAFWSLIRELDVTVLPNTAGCKTVREAVTTAKLARELFGTSWIKLEVIADNDTLQPDVVGLVEAAAILIRDGFDVFPYCTEDLGVAMRLVEAGCKVVMPWAAPIGSAKGITNRDALKLLRERLPDVTLVVDAGLGAPSHAAQACELGYDAVLLNTAVAKAADPVVMAGAFRLAVEAGRNAYEAGLMEARDFASPSTPVVGTPFWHAVS.

Lys-96 (schiff-base intermediate with DXP) is an active-site residue. Residues Gly-157, 184–185, and 206–207 contribute to the 1-deoxy-D-xylulose 5-phosphate site; these read AG and NT.

It belongs to the ThiG family. As to quaternary structure, homotetramer. Forms heterodimers with either ThiH or ThiS.

It localises to the cytoplasm. It catalyses the reaction [ThiS sulfur-carrier protein]-C-terminal-Gly-aminoethanethioate + 2-iminoacetate + 1-deoxy-D-xylulose 5-phosphate = [ThiS sulfur-carrier protein]-C-terminal Gly-Gly + 2-[(2R,5Z)-2-carboxy-4-methylthiazol-5(2H)-ylidene]ethyl phosphate + 2 H2O + H(+). Its pathway is cofactor biosynthesis; thiamine diphosphate biosynthesis. Catalyzes the rearrangement of 1-deoxy-D-xylulose 5-phosphate (DXP) to produce the thiazole phosphate moiety of thiamine. Sulfur is provided by the thiocarboxylate moiety of the carrier protein ThiS. In vitro, sulfur can be provided by H(2)S. The protein is Thiazole synthase of Nitrobacter winogradskyi (strain ATCC 25391 / DSM 10237 / CIP 104748 / NCIMB 11846 / Nb-255).